Consider the following 430-residue polypeptide: Histidine--tRNA ligase (430 aa).

This sequence belongs to the class-II aminoacyl-tRNA synthetase family. As to quaternary structure, homodimer.

It localises to the cytoplasm. It carries out the reaction tRNA(His) + L-histidine + ATP = L-histidyl-tRNA(His) + AMP + diphosphate + H(+). In Acinetobacter baumannii (strain SDF), this protein is Histidine--tRNA ligase.